The chain runs to 350 residues: Biotin synthase 1 (350 aa).

Residues 71–296 form the Radical SAM core domain; that stretch reads EEVEVEGIIS…KTILRFAGGR (226 aa). [4Fe-4S] cluster is bound by residues cysteine 86, cysteine 90, and cysteine 93. Residues cysteine 129, cysteine 221, and arginine 291 each contribute to the [2Fe-2S] cluster site.

Belongs to the radical SAM superfamily. Biotin synthase family. Homodimer. [4Fe-4S] cluster serves as cofactor. Requires [2Fe-2S] cluster as cofactor.

It carries out the reaction (4R,5S)-dethiobiotin + (sulfur carrier)-SH + 2 reduced [2Fe-2S]-[ferredoxin] + 2 S-adenosyl-L-methionine = (sulfur carrier)-H + biotin + 2 5'-deoxyadenosine + 2 L-methionine + 2 oxidized [2Fe-2S]-[ferredoxin]. The protein operates within cofactor biosynthesis; biotin biosynthesis; biotin from 7,8-diaminononanoate: step 2/2. In terms of biological role, catalyzes the conversion of dethiobiotin (DTB) to biotin by the insertion of a sulfur atom into dethiobiotin via a radical-based mechanism. The chain is Biotin synthase 1 from Corynebacterium diphtheriae (strain ATCC 700971 / NCTC 13129 / Biotype gravis).